Consider the following 217-residue polypeptide: Cytidylate kinase (217 aa).

Position 9 to 17 (G9 to T17) interacts with ATP.

Belongs to the cytidylate kinase family. Type 1 subfamily.

It localises to the cytoplasm. The catalysed reaction is CMP + ATP = CDP + ADP. The enzyme catalyses dCMP + ATP = dCDP + ADP. The protein is Cytidylate kinase of Clostridium acetobutylicum (strain ATCC 824 / DSM 792 / JCM 1419 / IAM 19013 / LMG 5710 / NBRC 13948 / NRRL B-527 / VKM B-1787 / 2291 / W).